The primary structure comprises 573 residues: AP-4 complex accessory subunit Tepsin (573 aa).

Positions 8 to 141 (RDRLSFLHRL…FSDAVPQPPS (134 aa)) constitute an ENTH domain. 2 disordered regions span residues 136–155 (VPQP…MGAQ) and 194–311 (NAVR…NDCQ). A compositionally biased stretch (pro residues) spans 137–150 (PQPPSQPPQIPPPA). Residues 217–229 (PAVTPSASHTHPN) show a composition bias toward polar residues. Residues 260 to 293 (SSPSSQNSSCTSNLSRASDSGSRSGSDSHSGTSR) show a composition bias toward low complexity. Residues 294–303 (EPGDLAERAE) are compositionally biased toward basic and acidic residues. The residue at position 400 (S400) is a Phosphoserine. Residues 497-526 (CSSEQGTESEQRLENTDTPEDSSSPLPWSP) are disordered. Residues 526 to 536 (PNSLFAGMELV) form an interaction with AP4B1 region. The interval 563 to 573 (SEPSAFAFLNM) is interaction with AP4E1.

Interacts with AP4B1 and AP4E1; the interaction is direct and mediates the association of TEPSIN with the adapter-like complex 4 (AP-4), a heterotetramer composed of AP4B1, AP4E1, AP4M1 and AP4S1.

Its subcellular location is the golgi apparatus. The protein resides in the trans-Golgi network membrane. The protein localises to the cytoplasmic vesicle. It localises to the cytoplasm. It is found in the cytosol. In terms of biological role, associates with the adapter-like complex 4 (AP-4) and may therefore play a role in vesicular trafficking of proteins at the trans-Golgi network. The chain is AP-4 complex accessory subunit Tepsin from Mus musculus (Mouse).